The chain runs to 223 residues: Deoxyribose-phosphate aldolase (223 aa).

Asp-91 (proton donor/acceptor) is an active-site residue. Lys-154 functions as the Schiff-base intermediate with acetaldehyde in the catalytic mechanism. The Proton donor/acceptor role is filled by Lys-183.

Belongs to the DeoC/FbaB aldolase family. DeoC type 1 subfamily.

The protein localises to the cytoplasm. It catalyses the reaction 2-deoxy-D-ribose 5-phosphate = D-glyceraldehyde 3-phosphate + acetaldehyde. It participates in carbohydrate degradation; 2-deoxy-D-ribose 1-phosphate degradation; D-glyceraldehyde 3-phosphate and acetaldehyde from 2-deoxy-alpha-D-ribose 1-phosphate: step 2/2. In terms of biological role, catalyzes a reversible aldol reaction between acetaldehyde and D-glyceraldehyde 3-phosphate to generate 2-deoxy-D-ribose 5-phosphate. The polypeptide is Deoxyribose-phosphate aldolase (Geobacillus thermodenitrificans (strain NG80-2)).